The chain runs to 691 residues: NADH-ubiquinone oxidoreductase 75 kDa subunit (691 aa).

The region spanning 1-78 (MVNVFVDGLS…NMKIFTNTPL (78 aa)) is the 2Fe-2S ferredoxin-type domain. Positions 34, 45, 48, and 62 each coordinate [2Fe-2S] cluster. One can recognise a 4Fe-4S His(Cys)3-ligated-type domain in the interval 78 to 117 (LVKKAREGVLEFLLVNHPLDCPICDQGGECDLQDLTMVYG). [4Fe-4S] cluster-binding residues include His94, Cys98, Cys101, Cys107, Cys146, Cys149, Cys152, and Cys196. The 4Fe-4S Mo/W bis-MGD-type domain maps to 215–271 (LQSTESIDVSDAIGSNIRIDVRGSEIMRILPRLNEDVNEEWISDKARFCYDGLKRQR).

This sequence belongs to the complex I 75 kDa subunit family. As to quaternary structure, complex I is composed of about 30 different subunits. Requires [2Fe-2S] cluster as cofactor. [4Fe-4S] cluster serves as cofactor.

The protein localises to the mitochondrion inner membrane. It carries out the reaction a ubiquinone + NADH + 5 H(+)(in) = a ubiquinol + NAD(+) + 4 H(+)(out). Its function is as follows. Core subunit of the mitochondrial membrane respiratory chain NADH dehydrogenase (Complex I) that is believed to belong to the minimal assembly required for catalysis. Complex I functions in the transfer of electrons from NADH to the respiratory chain. The immediate electron acceptor for the enzyme is believed to be ubiquinone. This is the largest subunit of complex I and it is a component of the iron-sulfur (IP) fragment of the enzyme. It may form part of the active site crevice where NADH is oxidized. This chain is NADH-ubiquinone oxidoreductase 75 kDa subunit (NAD11), found in Reclinomonas americana.